We begin with the raw amino-acid sequence, 191 residues long: Large ribosomal subunit protein uL5 (191 aa).

It belongs to the universal ribosomal protein uL5 family. In terms of assembly, part of the 50S ribosomal subunit; part of the 5S rRNA/L5/L18/L25 subcomplex. Contacts the 5S rRNA and the P site tRNA. Forms a bridge to the 30S subunit in the 70S ribosome.

Functionally, this is one of the proteins that bind and probably mediate the attachment of the 5S RNA into the large ribosomal subunit, where it forms part of the central protuberance. In the 70S ribosome it contacts protein S13 of the 30S subunit (bridge B1b), connecting the 2 subunits; this bridge is implicated in subunit movement. Contacts the P site tRNA; the 5S rRNA and some of its associated proteins might help stabilize positioning of ribosome-bound tRNAs. The chain is Large ribosomal subunit protein uL5 from Micrococcus luteus (Micrococcus lysodeikticus).